A 546-amino-acid polypeptide reads, in one-letter code: Chaperonin GroEL (546 aa).

ATP-binding positions include 30–33 (TLGP), K51, 87–91 (DGTTT), G415, 479–481 (NAA), and D495. Residues 527–546 (DESAAPAMPGGMGGMGDMGM) form a disordered region. Over residues 536–546 (GGMGGMGDMGM) the composition is skewed to gly residues.

This sequence belongs to the chaperonin (HSP60) family. Forms a cylinder of 14 subunits composed of two heptameric rings stacked back-to-back. Interacts with the co-chaperonin GroES.

The protein localises to the cytoplasm. The enzyme catalyses ATP + H2O + a folded polypeptide = ADP + phosphate + an unfolded polypeptide.. Functionally, together with its co-chaperonin GroES, plays an essential role in assisting protein folding. The GroEL-GroES system forms a nano-cage that allows encapsulation of the non-native substrate proteins and provides a physical environment optimized to promote and accelerate protein folding. The chain is Chaperonin GroEL from Acidovorax ebreus (strain TPSY) (Diaphorobacter sp. (strain TPSY)).